The chain runs to 660 residues: Peroxisomal acyl-coenzyme A oxidase 1 (660 aa).

Ser-26 bears the Phosphoserine mark. 2 positions are modified to N6-succinyllysine: Lys-89 and Lys-90. Thr-139 and Gly-178 together coordinate FAD. Position 216 is an N6-acetyllysine (Lys-216). Lys-241 bears the N6-succinyllysine mark. N6-acetyllysine is present on residues Lys-255, Lys-267, and Lys-272. N6-succinyllysine is present on Lys-349. Catalysis depends on Glu-421, which acts as the Proton acceptor. Lys-437 and Lys-446 each carry N6-acetyllysine; alternate. N6-succinyllysine; alternate occurs at positions 437 and 446. Lys-500 and Lys-504 each carry N6-acetyllysine. Lys-512 carries the N6-acetyllysine; alternate modification. Residue Lys-512 is modified to N6-succinyllysine; alternate. At Lys-542 the chain carries N6-succinyllysine. At Lys-637 the chain carries N6-acetyllysine; alternate. The residue at position 637 (Lys-637) is an N6-succinyllysine; alternate. Residue Lys-643 is modified to N6-succinyllysine. At Ser-649 the chain carries Phosphoserine. Lys-651 bears the N6-acetyllysine mark. Lys-654 bears the N6-succinyllysine mark. Positions 658–660 match the Microbody targeting signal motif; it reads SKL.

This sequence belongs to the acyl-CoA oxidase family. As to quaternary structure, homodimer. Interacts with LONP2. FAD is required as a cofactor. As to expression, widely expressed with highest levels of isoform 1 and isoform 2 detected in testis. Isoform 1 is expressed at higher levels than isoform 2 in liver and kidney while isoform 2 levels are higher in brain, lung, muscle, white adipose tissue and testis. Levels are almost equal in heart.

It is found in the peroxisome. The catalysed reaction is a 2,3-saturated acyl-CoA + O2 = a (2E)-enoyl-CoA + H2O2. It catalyses the reaction hexadecanoyl-CoA + O2 = (2E)-hexadecenoyl-CoA + H2O2. The enzyme catalyses dodecanoyl-CoA + O2 = (2E)-dodecenoyl-CoA + H2O2. It carries out the reaction octanoyl-CoA + O2 = (2E)-octenoyl-CoA + H2O2. The catalysed reaction is decanoyl-CoA + O2 = (2E)-decenoyl-CoA + H2O2. It catalyses the reaction tetradecanoyl-CoA + O2 = (2E)-tetradecenoyl-CoA + H2O2. The enzyme catalyses hexadecanedioyl-CoA + O2 = (2E)-hexadecenedioyl-CoA + H2O2. It carries out the reaction (5Z,8Z,11Z,14Z,17Z)-eicosapentaenoyl-CoA + O2 = (2E,5Z,8Z,11Z,14Z,17Z)-icosahexaenoyl-CoA + H2O2. The catalysed reaction is tetracosanoyl-CoA + O2 = (2E)-tetracosenoyl-CoA + H2O2. It catalyses the reaction glutaryl-CoA + O2 = (2E)-glutaconyl-CoA + H2O2. The enzyme catalyses hexanoyl-CoA + O2 = (2E)-hexenoyl-CoA + H2O2. It carries out the reaction octadecanoyl-CoA + O2 = (2E)-octadecenoyl-CoA + H2O2. The catalysed reaction is (6Z,9Z,12Z,15Z,18Z,21Z)-tetracosahexaenoyl-CoA + O2 = (2E,6Z,9Z,12Z,15Z,18Z,21Z)-tetracosaheptaenoyl-CoA + H2O2. It participates in lipid metabolism; peroxisomal fatty acid beta-oxidation. Functionally, involved in the initial and rate-limiting step of peroxisomal beta-oxidation of straight-chain saturated and unsaturated very-long-chain fatty acids. Catalyzes the desaturation of fatty acyl-CoAs such as palmitoyl-CoA (hexadecanoyl-CoA) to 2-trans-enoyl-CoAs ((2E)-enoyl-CoAs) such as (2E)-hexadecenoyl-CoA, and donates electrons directly to molecular oxygen (O(2)), thereby producing hydrogen peroxide (H(2)O(2)). Its function is as follows. Shows highest activity against medium-chain fatty acyl-CoAs. Shows optimum activity with a chain length of 10 carbons (decanoyl-CoA) in vitro. In terms of biological role, is active against a much broader range of substrates and shows activity towards long-chain fatty acyl-CoAs. The chain is Peroxisomal acyl-coenzyme A oxidase 1 from Homo sapiens (Human).